Reading from the N-terminus, the 271-residue chain is NH(3)-dependent NAD(+) synthetase (271 aa).

Residue 43–50 coordinates ATP; sequence GISGGQDS. D49 contacts Mg(2+). R137 provides a ligand contact to deamido-NAD(+). T157 is an ATP binding site. Residue E162 participates in Mg(2+) binding. Deamido-NAD(+)-binding residues include K170 and D177. Residues K186 and T208 each contribute to the ATP site. 257-258 provides a ligand contact to deamido-NAD(+); it reads HK.

It belongs to the NAD synthetase family. In terms of assembly, homodimer.

The enzyme catalyses deamido-NAD(+) + NH4(+) + ATP = AMP + diphosphate + NAD(+) + H(+). Its pathway is cofactor biosynthesis; NAD(+) biosynthesis; NAD(+) from deamido-NAD(+) (ammonia route): step 1/1. In terms of biological role, catalyzes the ATP-dependent amidation of deamido-NAD to form NAD. Uses ammonia as a nitrogen source. The protein is NH(3)-dependent NAD(+) synthetase of Exiguobacterium sibiricum (strain DSM 17290 / CCUG 55495 / CIP 109462 / JCM 13490 / 255-15).